A 701-amino-acid polypeptide reads, in one-letter code: Peptide transporter CstA (701 aa).

The Cytoplasmic segment spans residues 1–6 (MNKSGK). Residues 7-27 (YLVWTVLSVMGAFALGYIALN) traverse the membrane as a helical segment. Residues 28-33 (RGEQIN) lie on the Periplasmic side of the membrane. Residues 34 to 54 (ALWIVVASVCIYLIAYRFYGL) traverse the membrane as a helical segment. The Cytoplasmic segment spans residues 55-86 (YIAKNVLAVDPTRMTPAVRHNDGLDYVPTDKK). Residues 87 to 107 (VLFGHHFAAIAGAGPLVGPVL) traverse the membrane as a helical segment. Residues 108-117 (AAQMGYLPGM) lie on the Periplasmic side of the membrane. Residues 118–138 (IWLLAGVVLAGAVQDFMVLFV) traverse the membrane as a helical segment. The Cytoplasmic segment spans residues 139–160 (STRRDGRSLGELVKEEMGPTAG). A helical membrane pass occupies residues 161–181 (VIALVACFMIMVIILAVLAMI). Residues 182 to 189 (VVKALTHS) are Periplasmic-facing. A helical membrane pass occupies residues 190-210 (PWGTYTVAFTIPLALFMGIYL). The Cytoplasmic portion of the chain corresponds to 211–217 (RYLRPGR). Residues 218-238 (IGEVSVIGLVFLIFAIISGGW) form a helical membrane-spanning segment. Residues 239 to 255 (VAESPTWAPYFDFTGVQ) lie on the Periplasmic side of the membrane. Residues 256–276 (LTWMLVGYGFVAAVLPVWLLL) traverse the membrane as a helical segment. Topologically, residues 277–280 (APRD) are cytoplasmic. The helical transmembrane segment at 281 to 301 (YLSTFLKIGTIVGLAVGILIM) threads the bilayer. Residues 302 to 324 (RPTLTMPALTKFVDGTGPVWTGN) lie on the Periplasmic side of the membrane. Residues 325-345 (LFPFLFITIACGAVSGFHALI) traverse the membrane as a helical segment. At 346–372 (SSGTTPKMLANEGQACFIGYGGMLMES) the chain is on the cytoplasmic side. The helical transmembrane segment at 373–393 (FVAIMALVSACIIDPGVYFAM) threads the bilayer. The Periplasmic segment spans residues 394–395 (NS). Residues 396 to 416 (PMAVLAPAGTADVVASAAQVV) form a helical membrane-spanning segment. Topologically, residues 417–439 (SSWGFSITPDTLNQIASEVGEQS) are cytoplasmic. A helical membrane pass occupies residues 440–460 (IISRAGGAPTLAVGMAYILHG). Topologically, residues 461–463 (ALG) are periplasmic. A helical membrane pass occupies residues 464–484 (GMMDVAFWYHFAILFEALFIL). Residues 485–523 (TAVDAGTRAARFMLQDLLGVVSPGLKRTDSLPANLLATA) are Cytoplasmic-facing. A helical membrane pass occupies residues 524–544 (LCVLAWGYFLHQGVVDPLGGI). The Periplasmic segment spans residues 545-550 (NTLWPL). Residues 551-571 (FGIANQMLAGMALMLCAVVLF) traverse the membrane as a helical segment. Over 572 to 577 (KMKRQR) the chain is Cytoplasmic. The helical transmembrane segment at 578–598 (YAWVALVPTAWLLICTLTAGW) threads the bilayer. Residues 599 to 643 (QKAFSPDAKVGFLAIANKFQAMIDSGNIPSQYTESQLAQLVFNNR) are Periplasmic-facing. A helical membrane pass occupies residues 644-664 (LDAGLTIFFMVVVVVLALFSI). Residues 665-701 (KTALAALKDPKPTAKETPYEPMPENVEEIVAQAKGAH) are Cytoplasmic-facing.

It belongs to the peptide transporter carbon starvation (CstA) (TC 2.A.114) family.

The protein resides in the cell inner membrane. Functionally, involved in peptide utilization during carbon starvation. In Escherichia coli (strain K12), this protein is Peptide transporter CstA.